We begin with the raw amino-acid sequence, 277 residues long: Large ribosomal subunit protein uL2 (277 aa).

Residues 219 to 277 (TVRGSVMNPNDHPHGGGEGKAPVGRKAPSTPWGKPALGLKTRNKKAKSDKLIVRRRNEK) are disordered. A compositionally biased stretch (basic and acidic residues) spans 264 to 277 (AKSDKLIVRRRNEK).

Belongs to the universal ribosomal protein uL2 family. As to quaternary structure, part of the 50S ribosomal subunit. Forms a bridge to the 30S subunit in the 70S ribosome.

Functionally, one of the primary rRNA binding proteins. Required for association of the 30S and 50S subunits to form the 70S ribosome, for tRNA binding and peptide bond formation. It has been suggested to have peptidyltransferase activity; this is somewhat controversial. Makes several contacts with the 16S rRNA in the 70S ribosome. The polypeptide is Large ribosomal subunit protein uL2 (Streptococcus gordonii (strain Challis / ATCC 35105 / BCRC 15272 / CH1 / DL1 / V288)).